Reading from the N-terminus, the 513-residue chain is Ribonuclease Y (513 aa).

Residues 3–23 (IGTLLLFTFLGLVAGATAVWL) form a helical membrane-spanning segment. A disordered region spans residues 77–96 (LQSVESKLKSREQTLNQRQE). Over residues 82–96 (SKLKSREQTLNQRQE) the composition is skewed to basic and acidic residues. The region spanning 203-263 (SVTVFHIESD…VRREIARLAL (61 aa)) is the KH domain. Residues 329 to 422 (LLQHSRETAN…VQVCDAISGA (94 aa)) form the HD domain.

Belongs to the RNase Y family.

The protein resides in the cell membrane. Functionally, endoribonuclease that initiates mRNA decay. This chain is Ribonuclease Y, found in Porphyromonas gingivalis (strain ATCC BAA-308 / W83).